The primary structure comprises 1007 residues: Kinesin-like protein KIN-14F (1007 aa).

In terms of domain architecture, Calponin-homology (CH) spans 41-187 (AARRNEAAGW…CVLALKSYGD (147 aa)). One can recognise a Kinesin motor domain in the interval 390-715 (SIRVYCRVRP…LKFAERVSTV (326 aa)). An ATP-binding site is contributed by 472 to 479 (GQTGSGKT). Residues 718-748 (GAARLNKESGEVKELKEQIARLKSSLAMKDS) adopt a coiled-coil conformation. Basic and acidic residues predominate over residues 885–904 (KQYLRNNSRKKDGNEFEQQR). Disordered stretches follow at residues 885-924 (KQYLRNNSRKKDGNEFEQQRPRFYSTNTDDSDDIDIATSD) and 944-1007 (SENG…AGTK). Residues 963-1001 (TRTPLHSQIPSASRKTSNGNRSGRQPLSGSDSRRLSSNG) show a composition bias toward polar residues.

This sequence belongs to the TRAFAC class myosin-kinesin ATPase superfamily. Kinesin family. KIN-14 subfamily.

The protein is Kinesin-like protein KIN-14F of Oryza sativa subsp. japonica (Rice).